The following is a 1358-amino-acid chain: DNA-directed RNA polymerase subunit beta (1358 aa).

It belongs to the RNA polymerase beta chain family. As to quaternary structure, the RNAP catalytic core consists of 2 alpha, 1 beta, 1 beta' and 1 omega subunit. When a sigma factor is associated with the core the holoenzyme is formed, which can initiate transcription.

It carries out the reaction RNA(n) + a ribonucleoside 5'-triphosphate = RNA(n+1) + diphosphate. Its function is as follows. DNA-dependent RNA polymerase catalyzes the transcription of DNA into RNA using the four ribonucleoside triphosphates as substrates. The chain is DNA-directed RNA polymerase subunit beta from Francisella tularensis subsp. holarctica (strain FTNF002-00 / FTA).